The sequence spans 628 residues: Probable potassium transport system protein Kup (628 aa).

The next 12 membrane-spanning stretches (helical) occupy residues 20 to 40, 63 to 83, 110 to 130, 151 to 171, 178 to 198, 212 to 232, 256 to 276, 296 to 316, 346 to 366, 375 to 395, 398 to 418, and 422 to 442; these read ALLT…SPLY, IISM…VMLV, FVAV…VITP, FILP…PLGT, FGPI…PQII, ALGL…AVVL, WFCV…ALVI, IPLV…VISG, IYMP…VLVF, AYGL…LIYV, TWWK…LLFA, and TKIH…IVVM.

It belongs to the HAK/KUP transporter (TC 2.A.72) family.

It localises to the cell membrane. The catalysed reaction is K(+)(in) + H(+)(in) = K(+)(out) + H(+)(out). Its function is as follows. Transport of potassium into the cell. Likely operates as a K(+):H(+) symporter. The polypeptide is Probable potassium transport system protein Kup (Corynebacterium glutamicum (strain R)).